A 450-amino-acid polypeptide reads, in one-letter code: Coiled-coil domain-containing protein 149-A (450 aa).

Coiled-coil stretches lie at residues 1 to 197 and 259 to 286; these read MANQ…DRRK and IQHQRQTNRILGNRVADLERKLKTLEIS. The segment at 290 to 358 is disordered; that stretch reads SLPDDRTGRG…NGQVGTQLKE (69 aa). A compositionally biased stretch (polar residues) spans 343–354; the sequence is PSGTRTNGQVGT.

Belongs to the CCDC149 family.

In Danio rerio (Zebrafish), this protein is Coiled-coil domain-containing protein 149-A (ccdc149a).